The chain runs to 356 residues: S-adenosylmethionine:tRNA ribosyltransferase-isomerase (356 aa).

Belongs to the QueA family. In terms of assembly, monomer.

The protein resides in the cytoplasm. It catalyses the reaction 7-aminomethyl-7-carbaguanosine(34) in tRNA + S-adenosyl-L-methionine = epoxyqueuosine(34) in tRNA + adenine + L-methionine + 2 H(+). The protein operates within tRNA modification; tRNA-queuosine biosynthesis. Functionally, transfers and isomerizes the ribose moiety from AdoMet to the 7-aminomethyl group of 7-deazaguanine (preQ1-tRNA) to give epoxyqueuosine (oQ-tRNA). The sequence is that of S-adenosylmethionine:tRNA ribosyltransferase-isomerase from Serratia proteamaculans (strain 568).